A 732-amino-acid polypeptide reads, in one-letter code: uncharacterized protein (732 aa).

The interval 145 to 207 (ETLRDSVINP…RRRPEMASPH (63 aa)) is disordered. Residues 170–179 (KGHETLERGS) show a composition bias toward basic and acidic residues. The region spanning 176–524 (ERGSKALGPE…KKIPFLGYLI (349 aa)) is the Reverse transcriptase domain.

It localises to the mitochondrion. This is an uncharacterized protein from Marchantia polymorpha (Common liverwort).